Consider the following 487-residue polypeptide: Glycogen synthase (487 aa).

Lysine 19 contributes to the ADP-alpha-D-glucose binding site.

The protein belongs to the glycosyltransferase 1 family. Bacterial/plant glycogen synthase subfamily.

It carries out the reaction [(1-&gt;4)-alpha-D-glucosyl](n) + ADP-alpha-D-glucose = [(1-&gt;4)-alpha-D-glucosyl](n+1) + ADP + H(+). The protein operates within glycan biosynthesis; glycogen biosynthesis. Synthesizes alpha-1,4-glucan chains using ADP-glucose. The polypeptide is Glycogen synthase (Moorella thermoacetica (strain ATCC 39073 / JCM 9320)).